A 382-amino-acid chain; its full sequence is Pyrimidine monooxygenase RutA (382 aa).

FMN-binding positions include Ile68–Lys69, Asn134, Glu143, Arg159–Tyr160, and Ser209.

This sequence belongs to the NtaA/SnaA/DszA monooxygenase family. RutA subfamily.

The catalysed reaction is uracil + FMNH2 + NADH + O2 = (Z)-3-ureidoacrylate + FMN + NAD(+) + H2O + H(+). The enzyme catalyses thymine + FMNH2 + NADH + O2 = (Z)-2-methylureidoacrylate + FMN + NAD(+) + H2O + H(+). Functionally, catalyzes the pyrimidine ring opening between N-3 and C-4 by an unusual flavin hydroperoxide-catalyzed mechanism, adding oxygen atoms in the process to yield ureidoacrylate peracid, that immediately reacts with FMN forming ureidoacrylate and FMN-N(5)-oxide. The FMN-N(5)-oxide reacts spontaneously with NADH to produce FMN. Requires the flavin reductase RutF to regenerate FMN in vivo. The chain is Pyrimidine monooxygenase RutA from Escherichia coli O45:K1 (strain S88 / ExPEC).